A 262-amino-acid chain; its full sequence is Kallikrein-1 (262 aa).

Residues 1–18 (MWFLVLCLALSLGGTGAA) form the signal peptide. Positions 19–24 (PPIQSR) are cleaved as a propeptide — activation peptide. The 235-residue stretch at 25–259 (IVGGWECEQH…YVKWIEDTIA (235 aa)) folds into the Peptidase S1 domain. Cystine bridges form between C31/C174, C50/C66, C153/C220, C185/C199, and C210/C235. The active-site Charge relay system is H65. Residue S93 is glycosylated (O-linked (GalNAc...) serine). N-linked (GlcNAc...) asparagine glycosylation occurs at N102. S104 carries an O-linked (GalNAc...) serine glycan. An N-linked (GlcNAc...) asparagine glycan is attached at N108. D120 serves as the catalytic Charge relay system. The N-linked (GlcNAc...) asparagine; partial glycan is linked to N165. S167 carries O-linked (GalNAc...) serine glycosylation. S214 functions as the Charge relay system in the catalytic mechanism.

Belongs to the peptidase S1 family. Kallikrein subfamily. Post-translationally, the O-linked polysaccharides on Ser-93, Ser-104 and Ser-167 are probably the mucin type linked to GalNAc. In PubMed:3163150, GalNAc was detected with the corresponding peptides but not located. In terms of tissue distribution, isoform 2 is expressed in pancreas, salivary glands, kidney, colon, prostate gland, testis, spleen and the colon adenocarcinoma cell line T84.

The enzyme catalyses Preferential cleavage of Arg-|-Xaa bonds in small molecule substrates. Highly selective action to release kallidin (lysyl-bradykinin) from kininogen involves hydrolysis of Met-|-Xaa or Leu-|-Xaa.. In terms of biological role, glandular kallikreins cleave Met-Lys and Arg-Ser bonds in kininogen to release Lys-bradykinin. (Microbial infection) Cleaves Neisseria meningitidis NHBA in saliva; Neisseria is an obligate commensal of the nasopharyngeal mucosa. The protein is Kallikrein-1 (KLK1) of Homo sapiens (Human).